A 313-amino-acid chain; its full sequence is S-methyl-5'-thioadenosine phosphorylase (313 aa).

Phosphate-binding positions include T20, 68–69 (RH), and 101–102 (SA). M203 contributes to the substrate binding site. Phosphate is bound at residue S204. Substrate is bound at residue 227–229 (DYD).

It belongs to the PNP/MTAP phosphorylase family. MTAP subfamily. As to quaternary structure, homotrimer.

It localises to the cytoplasm. The protein resides in the nucleus. It catalyses the reaction S-methyl-5'-thioadenosine + phosphate = 5-(methylsulfanyl)-alpha-D-ribose 1-phosphate + adenine. Its pathway is amino-acid biosynthesis; L-methionine biosynthesis via salvage pathway; S-methyl-5-thio-alpha-D-ribose 1-phosphate from S-methyl-5'-thioadenosine (phosphorylase route): step 1/1. Catalyzes the reversible phosphorylation of S-methyl-5'-thioadenosine (MTA) to adenine and 5-methylthioribose-1-phosphate. Involved in the breakdown of MTA, a major by-product of polyamine biosynthesis. Responsible for the first step in the methionine salvage pathway after MTA has been generated from S-adenosylmethionine. Has broad substrate specificity with 6-aminopurine nucleosides as preferred substrates. The polypeptide is S-methyl-5'-thioadenosine phosphorylase (Ajellomyces capsulatus (strain G186AR / H82 / ATCC MYA-2454 / RMSCC 2432) (Darling's disease fungus)).